The following is a 425-amino-acid chain: Synaptotagmin-4 (425 aa).

Topologically, residues 1–16 (MAPITTSREEFDEIPT) are vesicular. Residues 17-37 (VVGIFSAFGLVFTVSLFAWIC) form a helical membrane-spanning segment. Residues 38–425 (CQRKSSKSNK…IAKWHVLCDG (388 aa)) lie on the Cytoplasmic side of the membrane. The span at 73–83 (FGADDKNEVKN) shows a compositional bias: basic and acidic residues. Disordered regions lie at residues 73–93 (FGAD…NSLH) and 127–147 (LEGE…SLTS). Serine 135 carries the post-translational modification Phosphoserine; by MAPK8. Residues 135–146 (SPESLKSSTSLT) show a composition bias toward low complexity. C2 domains are found at residues 153 to 274 (KLGT…MLMN) and 287 to 420 (GRGE…AKWH). Residues aspartate 246, serine 249, and aspartate 252 each coordinate Ca(2+).

This sequence belongs to the synaptotagmin family. Interacts with KIF1A; the interaction increases in presence of calcium and decreases when SYT4 is phosphorylated at Ser-135. The cofactor is Ca(2+). Phosphorylation at Ser-135 by MAPK8/JNK1 reduces interaction with KIF1A and neuronal dense core vesicles mobility. Expressed in melanocytes. Expressed in brain. Within brain, expression is highest in hippocampus, with substantial levels also detected in amygdala and thalamus.

It localises to the cytoplasmic vesicle. It is found in the secretory vesicle. The protein resides in the neuronal dense core vesicle membrane. Functionally, synaptotagmin family member which does not bind Ca(2+). Involved in neuronal dense core vesicles (DCVs) mobility through its interaction with KIF1A. Upon increased neuronal activity, phosphorylation by MAPK8/JNK1 destabilizes the interaction with KIF1A and captures DCVs to synapses. Plays a role in dendrite formation by melanocytes. This chain is Synaptotagmin-4 (SYT4), found in Homo sapiens (Human).